The chain runs to 81 residues: Photosystem I iron-sulfur center (81 aa).

4Fe-4S ferredoxin-type domains follow at residues 2-31 and 39-68; these read SHTV…MVPW and IASS…IRVY. [4Fe-4S] cluster is bound by residues C11, C14, C17, C21, C48, C51, C54, and C58.

The cyanobacterial PSI reaction center is composed of one copy each of PsaA,B,C,D,E,F,I,J,K,L,M and X, and forms trimeric complexes. [4Fe-4S] cluster serves as cofactor.

The protein resides in the cellular thylakoid membrane. It carries out the reaction reduced [plastocyanin] + hnu + oxidized [2Fe-2S]-[ferredoxin] = oxidized [plastocyanin] + reduced [2Fe-2S]-[ferredoxin]. In terms of biological role, apoprotein for the two 4Fe-4S centers FA and FB of photosystem I (PSI); essential for photochemical activity. FB is the terminal electron acceptor of PSI, donating electrons to ferredoxin. The C-terminus interacts with PsaA/B/D and helps assemble the protein into the PSI complex. Required for binding of PsaD and PsaE to PSI. PSI is a plastocyanin/cytochrome c6-ferredoxin oxidoreductase, converting photonic excitation into a charge separation, which transfers an electron from the donor P700 chlorophyll pair to the spectroscopically characterized acceptors A0, A1, FX, FA and FB in turn. This Mastigocladus laminosus (Fischerella sp.) protein is Photosystem I iron-sulfur center.